The following is a 1105-amino-acid chain: Lysylphosphatidylglycerol biosynthesis bifunctional protein LysX (1105 aa).

Residues 1–603 (MTVTKPRSVQ…LLHHDGSAPD (603 aa)) form a phosphatidylglycerol lysyltransferase region. The next 7 membrane-spanning stretches (helical) occupy residues 20–40 (VPAA…LASI), 62–82 (FPDT…ALAA), 86–106 (IAWL…AADI), 117–137 (FGEN…VLGY), 154–174 (AVLV…VELF), 186–203 (YVAN…DLFT), and 208–228 (VFLN…ATIV). The lysine--tRNA ligase stretch occupies residues 604-1105 (VSGLRQSAIA…TLPFPLAKPH (502 aa)). 2 residues coordinate Mg(2+): Asp1017 and Glu1024.

This sequence in the N-terminal section; belongs to the LPG synthetase family. In the C-terminal section; belongs to the class-II aminoacyl-tRNA synthetase family. Mg(2+) is required as a cofactor.

Its subcellular location is the cell membrane. It carries out the reaction tRNA(Lys) + L-lysine + ATP = L-lysyl-tRNA(Lys) + AMP + diphosphate. It catalyses the reaction L-lysyl-tRNA(Lys) + a 1,2-diacyl-sn-glycero-3-phospho-(1'-sn-glycerol) = a 1,2-diacyl-sn-glycero-3-phospho-1'-(3'-O-L-lysyl)-sn-glycerol + tRNA(Lys). Its function is as follows. Catalyzes the production of L-lysyl-tRNA(Lys)transfer and the transfer of a lysyl group from L-lysyl-tRNA(Lys) to membrane-bound phosphatidylglycerol (PG), which produces lysylphosphatidylglycerol (LPG), one of the components of the bacterial membrane with a positive net charge. LPG synthesis contributes to the resistance to cationic antimicrobial peptides (CAMPs) and likely protects M.tuberculosis against the CAMPs produced by competiting microorganisms (bacteriocins). In fact, the modification of anionic phosphatidylglycerol with positively charged L-lysine results in repulsion of the peptides. This Mycobacterium marinum (strain ATCC BAA-535 / M) protein is Lysylphosphatidylglycerol biosynthesis bifunctional protein LysX (lysX).